The sequence spans 243 residues: Pyridoxine 5'-phosphate synthase (243 aa).

Position 9 (asparagine 9) interacts with 3-amino-2-oxopropyl phosphate. 11 to 12 (DH) provides a ligand contact to 1-deoxy-D-xylulose 5-phosphate. Arginine 20 serves as a coordination point for 3-amino-2-oxopropyl phosphate. Catalysis depends on histidine 45, which acts as the Proton acceptor. 2 residues coordinate 1-deoxy-D-xylulose 5-phosphate: arginine 47 and histidine 52. The active-site Proton acceptor is the glutamate 72. Threonine 102 is a binding site for 1-deoxy-D-xylulose 5-phosphate. The Proton donor role is filled by histidine 193. 3-amino-2-oxopropyl phosphate is bound by residues glycine 194 and 215–216 (GH).

Belongs to the PNP synthase family. In terms of assembly, homooctamer; tetramer of dimers.

Its subcellular location is the cytoplasm. It catalyses the reaction 3-amino-2-oxopropyl phosphate + 1-deoxy-D-xylulose 5-phosphate = pyridoxine 5'-phosphate + phosphate + 2 H2O + H(+). The protein operates within cofactor biosynthesis; pyridoxine 5'-phosphate biosynthesis; pyridoxine 5'-phosphate from D-erythrose 4-phosphate: step 5/5. Its function is as follows. Catalyzes the complicated ring closure reaction between the two acyclic compounds 1-deoxy-D-xylulose-5-phosphate (DXP) and 3-amino-2-oxopropyl phosphate (1-amino-acetone-3-phosphate or AAP) to form pyridoxine 5'-phosphate (PNP) and inorganic phosphate. This chain is Pyridoxine 5'-phosphate synthase, found in Salmonella typhimurium (strain LT2 / SGSC1412 / ATCC 700720).